We begin with the raw amino-acid sequence, 481 residues long: Tagaturonate/fructuronate epimerase (481 aa).

Catalysis depends on aspartate 161, which acts as the Proton acceptor. Histidine 162 is an a divalent metal cation binding site. Catalysis depends on glutamate 266, which acts as the Proton donor. Lysine 308 and histidine 341 together coordinate a divalent metal cation.

This sequence belongs to the UxaE family. Requires a divalent metal cation as cofactor.

It carries out the reaction keto-D-tagaturonate = keto-D-fructuronate. Its function is as follows. Catalyzes the epimerization of D-tagaturonate (D-TagA) to D-fructuronate (D-FruA). The chain is Tagaturonate/fructuronate epimerase from Thermotoga maritima (strain ATCC 43589 / DSM 3109 / JCM 10099 / NBRC 100826 / MSB8).